Consider the following 208-residue polypeptide: Ribosomal RNA large subunit methyltransferase E (208 aa).

Residues G63, W65, D83, D99, and D124 each coordinate S-adenosyl-L-methionine. Catalysis depends on K164, which acts as the Proton acceptor.

It belongs to the class I-like SAM-binding methyltransferase superfamily. RNA methyltransferase RlmE family.

It localises to the cytoplasm. The catalysed reaction is uridine(2552) in 23S rRNA + S-adenosyl-L-methionine = 2'-O-methyluridine(2552) in 23S rRNA + S-adenosyl-L-homocysteine + H(+). Functionally, specifically methylates the uridine in position 2552 of 23S rRNA at the 2'-O position of the ribose in the fully assembled 50S ribosomal subunit. This chain is Ribosomal RNA large subunit methyltransferase E, found in Hamiltonella defensa subsp. Acyrthosiphon pisum (strain 5AT).